The sequence spans 110 residues: UPF0060 membrane protein Psyc_0916 (110 aa).

Helical transmembrane passes span 7 to 27 (VGLFAITALAEIAGCYLPYLW), 33 to 53 (SIWLLIPGALSLVAFVWLLSL), 63 to 83 (AAYGGVYISMAILWLWTVNGI), and 87 to 107 (TWDIVGSVVALIGMAIIMFAP).

It belongs to the UPF0060 family.

It is found in the cell inner membrane. This Psychrobacter arcticus (strain DSM 17307 / VKM B-2377 / 273-4) protein is UPF0060 membrane protein Psyc_0916.